Here is a 594-residue protein sequence, read N- to C-terminus: Potassium-transporting ATPase potassium-binding subunit (594 aa).

The next 10 helical transmembrane spans lie at 3-23 (ADFL…APLL), 67-87 (AVAM…LQRL), 136-156 (ALTV…IALV), 179-199 (LYVL…QGVV), 287-307 (LEML…GEMV), 314-334 (VAIL…AAYF), 415-435 (GLYG…LMIG), 453-473 (VALV…VAVL), 519-539 (VLLG…ILAL), and 562-582 (LFVA…YVPA).

Belongs to the KdpA family. The system is composed of three essential subunits: KdpA, KdpB and KdpC.

Its subcellular location is the cell inner membrane. Its function is as follows. Part of the high-affinity ATP-driven potassium transport (or Kdp) system, which catalyzes the hydrolysis of ATP coupled with the electrogenic transport of potassium into the cytoplasm. This subunit binds the periplasmic potassium ions and delivers the ions to the membrane domain of KdpB through an intramembrane tunnel. In Bordetella parapertussis (strain 12822 / ATCC BAA-587 / NCTC 13253), this protein is Potassium-transporting ATPase potassium-binding subunit.